A 168-amino-acid chain; its full sequence is Peptide deformylase (168 aa).

Fe cation is bound by residues Cys-92 and His-134. Glu-135 is an active-site residue. His-138 provides a ligand contact to Fe cation.

This sequence belongs to the polypeptide deformylase family. The cofactor is Fe(2+).

The catalysed reaction is N-terminal N-formyl-L-methionyl-[peptide] + H2O = N-terminal L-methionyl-[peptide] + formate. Its function is as follows. Removes the formyl group from the N-terminal Met of newly synthesized proteins. Requires at least a dipeptide for an efficient rate of reaction. N-terminal L-methionine is a prerequisite for activity but the enzyme has broad specificity at other positions. The protein is Peptide deformylase of Hahella chejuensis (strain KCTC 2396).